Consider the following 404-residue polypeptide: Putative gustatory receptor 94a (404 aa).

Over 1 to 11 the chain is Cytoplasmic; that stretch reads MDFTSDYAHRR. A helical transmembrane segment spans residues 12-32; sequence MVKFLTIILIGFMTVFGLLAN. Residues 33–43 lie on the Extracellular side of the membrane; that stretch reads RYRAGRRERFR. Residues 44-64 form a helical membrane-spanning segment; it reads FSKANLAFASLWAIAFSLVYG. Topologically, residues 65-133 are cytoplasmic; it reads RQIYKEYQEG…RLDSRSLYIS (69 aa). The helical transmembrane segment at 134–154 threads the bilayer; it reads IVLALVKTVAFPLTIEVAFIL. Residues 155–171 are Extracellular-facing; that stretch reads QQRRQHPEMSLIWTLYR. A helical membrane pass occupies residues 172 to 192; the sequence is LFPLIISNFLNNCYFGAMVVV. Residues 193-260 are Cytoplasmic-facing; sequence KEILYALNRR…HSGKYLTPMS (68 aa). Residues 261–281 form a helical membrane-spanning segment; sequence LSMILSLICHLLGITVGFYSL. The Extracellular portion of the chain corresponds to 282 to 296; it reads YYAIADTLIMGKPYD. The helical transmembrane segment at 297-317 threads the bilayer; it reads GLGSLINLVFLSISLAEITLL. The Cytoplasmic segment spans residues 318–376; the sequence is THLCNHLLVATRRSAVILQEMNLQHADSRYRQAVHGFTLLVTVTKYQIKPLGLYELDMR. The chain crosses the membrane as a helical span at residues 377–397; sequence LISNVFSAVASFLLILVQADL. The Extracellular portion of the chain corresponds to 398–404; it reads SQRFKMQ.

It belongs to the insect chemoreceptor superfamily. Gustatory receptor (GR) family. Gr22e subfamily. In terms of tissue distribution, in larvae, is expressed in neurons of the terminal external chemosensory organ.

It localises to the cell membrane. In terms of biological role, probable gustatory receptor which mediates acceptance or avoidance behavior, depending on its substrates. The chain is Putative gustatory receptor 94a (Gr94a) from Drosophila melanogaster (Fruit fly).